The chain runs to 413 residues: L-arginine-specific L-amino acid ligase (413 aa).

The ATP-grasp domain maps to lysine 115 to valine 312. Residue glycine 141–histidine 202 coordinates ATP. Residues glutamate 268 and glutamate 281 each contribute to the Mg(2+) site. Mn(2+) is bound by residues glutamate 268 and glutamate 281.

In terms of assembly, homodimer. Mg(2+) is required as a cofactor. It depends on Mn(2+) as a cofactor. Co(2+) serves as cofactor.

It catalyses the reaction an L-alpha-amino acid + L-arginine + ATP = L-arginyl-L-alpha-amino acid + ADP + phosphate + H(+). Its function is as follows. Catalyzes the synthesis of Arg-Xaa dipeptides in an ATP-dependent manner. Has strict specificity toward arginine as the N-terminal substrate. The protein is L-arginine-specific L-amino acid ligase of Bacillus subtilis.